The chain runs to 530 residues: Metal transporter Nramp2 (530 aa).

Positions 1–35 are disordered; sequence MENDVKENLEEEEDRLLPPPPPSQSLPSTDSESEA. Transmembrane regions (helical) follow at residues 68–88, 96–116, 153–173, 177–197, 205–225, 251–271, 297–317, 339–359, 395–415, 418–438, 456–476, and 484–504; these read LWLF…PGNL, AIAG…GLLI, LALI…IQIL, FLPL…FLFL, LEAV…WMFG, AVGV…SALV, VALF…AKGF, FGGG…AAGQ, IVPT…LDVL, WLNV…LTLV, IAWT…LDFF, and LFGV…VYLI.

Belongs to the NRAMP (TC 2.A.55) family.

It localises to the membrane. Its function is as follows. Seems to be involved in iron uptake. This is Metal transporter Nramp2 (NRAMP2) from Arabidopsis thaliana (Mouse-ear cress).